The following is a 995-amino-acid chain: DNA polymerase (995 aa).

This sequence belongs to the DNA polymerase type-B family.

The enzyme catalyses DNA(n) + a 2'-deoxyribonucleoside 5'-triphosphate = DNA(n+1) + diphosphate. In Kluyveromyces lactis (strain ATCC 8585 / CBS 2359 / DSM 70799 / NBRC 1267 / NRRL Y-1140 / WM37) (Yeast), this protein is DNA polymerase (RF1).